Reading from the N-terminus, the 275-residue chain is NH(3)-dependent NAD(+) synthetase (275 aa).

Position 50 to 57 (50 to 57) interacts with ATP; the sequence is GISGGVDS. Residue D56 participates in Mg(2+) binding. R147 lines the deamido-NAD(+) pocket. Position 167 (T167) interacts with ATP. E172 is a binding site for Mg(2+). The deamido-NAD(+) site is built by K180 and D187. ATP is bound by residues K196 and T218. 267 to 268 provides a ligand contact to deamido-NAD(+); it reads HK.

It belongs to the NAD synthetase family. In terms of assembly, homodimer.

It carries out the reaction deamido-NAD(+) + NH4(+) + ATP = AMP + diphosphate + NAD(+) + H(+). It functions in the pathway cofactor biosynthesis; NAD(+) biosynthesis; NAD(+) from deamido-NAD(+) (ammonia route): step 1/1. Catalyzes the ATP-dependent amidation of deamido-NAD to form NAD. Uses ammonia as a nitrogen source. The protein is NH(3)-dependent NAD(+) synthetase of Pseudomonas syringae pv. syringae (strain B728a).